A 124-amino-acid chain; its full sequence is Small ribosomal subunit protein uS12 (124 aa).

Residues 1 to 42 form a disordered region; it reads MPTTQQLIRKGRKTEEETSDAPALEGSPQRRGVCTRVYTTTP. D89 bears the 3-methylthioaspartic acid mark. Residues 105–124 are disordered; that stretch reads AGVEERRQGRSKYGTKKPRE. Residues 113 to 124 are compositionally biased toward basic residues; sequence GRSKYGTKKPRE.

It belongs to the universal ribosomal protein uS12 family. Part of the 30S ribosomal subunit. Contacts proteins S8 and S17. May interact with IF1 in the 30S initiation complex.

With S4 and S5 plays an important role in translational accuracy. Its function is as follows. Interacts with and stabilizes bases of the 16S rRNA that are involved in tRNA selection in the A site and with the mRNA backbone. Located at the interface of the 30S and 50S subunits, it traverses the body of the 30S subunit contacting proteins on the other side and probably holding the rRNA structure together. The combined cluster of proteins S8, S12 and S17 appears to hold together the shoulder and platform of the 30S subunit. In Salinibacter ruber (strain DSM 13855 / M31), this protein is Small ribosomal subunit protein uS12.